The primary structure comprises 301 residues: Putative glycosyltransferase MJ1113 (301 aa).

8 helical membrane-spanning segments follow: residues 2–22 (GHYF…SAVL), 62–82 (FIPF…IIGI), 95–115 (LILL…NSYV), 117–137 (LIEI…TNML), 140–160 (FNGL…LVLF), 164–184 (YTTG…LLIF), 191–211 (VFPG…LAVV), and 280–300 (VTVL…ISLI).

The protein belongs to the glycosyltransferase 4 family.

It localises to the cell membrane. In Methanocaldococcus jannaschii (strain ATCC 43067 / DSM 2661 / JAL-1 / JCM 10045 / NBRC 100440) (Methanococcus jannaschii), this protein is Putative glycosyltransferase MJ1113.